A 213-amino-acid polypeptide reads, in one-letter code: Isomeliandiol synthase MOI2 (213 aa).

Transmembrane regions (helical) follow at residues 18 to 38 (AALHAWNGLSLFLIVFISWFI), 52 to 72 (VLCWWALTGLIHVFQEGYYVF), 109 to 129 (IESMASVVLGPLSLLAAYALA), 137 to 157 (ILQFGVSIAQLYGACLYFLSA), and 171 to 191 (YWAYYVGQSSIWVIVPALIAI). The EXPERA domain occupies 48 to 190 (MDRVVLCWWA…IWVIVPALIA (143 aa)).

The protein belongs to the EBP family. Mainly expressed in petioles.

The protein resides in the membrane. It carries out the reaction 7,8-epoxymelianol = isomeliandiol. The protein operates within secondary metabolite biosynthesis; terpenoid biosynthesis. In terms of biological role, isomerase involved in the biosynthesis of limonoids triterpene natural products such as azadirachtin, an antifeedant widely used as bioinsecticide, and possessing many medicinal applications including anti-tumoral, anti-malarial, anti-rheumatic, antibacterial, anti-inflammatory, anti-pyretic and diuretic effects. Catalyzes the conversion of 7,8-epoxymelianol to isomeliandiol via skeletal rearrangements. This chain is Isomeliandiol synthase MOI2, found in Melia azedarach (Chinaberry tree).